Here is a 255-residue protein sequence, read N- to C-terminus: MLTKRIIACLDVKDGRVVKGMQFKNHEDMGDVIELAKFYSQNGIDELVFYDITASAKNERINRAWVSKVAQNISIPFCVAGGIKSEDDAKELLANGADKISINSPALNDPDLISRLAKSFGVQCVVVGIDTFKDENNELLVYKYTGDENKSHHSGKKTLEWVKQVCELGAGEIVLNMMNQDGMRKGYDLDQLTKVRQICPVPLVASGGAGAKEHFLDAFKLGVDGALAASVFHKKLIDIKELKLFLKDQGIQIRI.

Residues Asp11 and Asp130 contribute to the active site.

The protein belongs to the HisA/HisF family. Heterodimer of HisH and HisF.

Its subcellular location is the cytoplasm. It carries out the reaction 5-[(5-phospho-1-deoxy-D-ribulos-1-ylimino)methylamino]-1-(5-phospho-beta-D-ribosyl)imidazole-4-carboxamide + L-glutamine = D-erythro-1-(imidazol-4-yl)glycerol 3-phosphate + 5-amino-1-(5-phospho-beta-D-ribosyl)imidazole-4-carboxamide + L-glutamate + H(+). It functions in the pathway amino-acid biosynthesis; L-histidine biosynthesis; L-histidine from 5-phospho-alpha-D-ribose 1-diphosphate: step 5/9. In terms of biological role, IGPS catalyzes the conversion of PRFAR and glutamine to IGP, AICAR and glutamate. The HisF subunit catalyzes the cyclization activity that produces IGP and AICAR from PRFAR using the ammonia provided by the HisH subunit. This chain is Imidazole glycerol phosphate synthase subunit HisF, found in Campylobacter lari (strain RM2100 / D67 / ATCC BAA-1060).